The following is a 213-amino-acid chain: Cytokinin riboside 5'-monophosphate phosphoribohydrolase LOG1 (213 aa).

Substrate-binding positions include glutamate 78, arginine 96–lysine 97, glycine 113–glutamate 119, and threonine 125.

The protein belongs to the LOG family. As to expression, expressed in roots and shoots. Detected in the vascular tissues of roots, cotyledons, leaves and pistils, in the shoot apical meristem and in immature flowers.

The protein localises to the cytoplasm. It is found in the nucleus. The enzyme catalyses N(6)-(dimethylallyl)adenosine 5'-phosphate + H2O = N(6)-dimethylallyladenine + D-ribose 5-phosphate. The catalysed reaction is 9-ribosyl-trans-zeatin 5'-phosphate + H2O = trans-zeatin + D-ribose 5-phosphate. Functionally, cytokinin-activating enzyme working in the direct activation pathway. Phosphoribohydrolase that converts inactive cytokinin nucleotides to the biologically active free-base forms. The polypeptide is Cytokinin riboside 5'-monophosphate phosphoribohydrolase LOG1 (LOG1) (Arabidopsis thaliana (Mouse-ear cress)).